The chain runs to 365 residues: MIQTTVLHPKHLEAGAKMVDFHGWEMPINYGSQLEEHHQVRTDAGMFDVSHMTIVDLTGERVKAFLQHLLANDVAKLTVFGKALYSGMLTPEGGVIDDLITYYLGETFYRLVVNSATREKDLAWIRHHAQDFGVTVTERPELAMIAVQGSNAKAKAAKVFSAEQNAAVEGMKPFFGVQAGELFIATTGYTGEDGYEIVVPQEQACDLWQALLDNGVAPCGLGARDTLRLEAGMNLYGQDMDETVSPLAANMAWTIAWEPSDRQFIGRAALEAQKAAGSQPKLVGLVMEEKGVLRSGMPVTFTTAAGEEREGVITSGSFSPTLGYSIALARVPRDIGEQASVEIRKKLVTVKVTKPAFVRNGQKLV.

The protein belongs to the GcvT family. In terms of assembly, the glycine cleavage system is composed of four proteins: P, T, L and H.

The enzyme catalyses N(6)-[(R)-S(8)-aminomethyldihydrolipoyl]-L-lysyl-[protein] + (6S)-5,6,7,8-tetrahydrofolate = N(6)-[(R)-dihydrolipoyl]-L-lysyl-[protein] + (6R)-5,10-methylene-5,6,7,8-tetrahydrofolate + NH4(+). Functionally, the glycine cleavage system catalyzes the degradation of glycine. The polypeptide is Aminomethyltransferase (Aeromonas hydrophila subsp. hydrophila (strain ATCC 7966 / DSM 30187 / BCRC 13018 / CCUG 14551 / JCM 1027 / KCTC 2358 / NCIMB 9240 / NCTC 8049)).